The primary structure comprises 1037 residues: Presequence protease, mitochondrial (1037 aa).

The N-terminal 15 residues, Met-1–Arg-15, are a transit peptide targeting the mitochondrion. Zn(2+) is bound at residue His-104. Glu-107 acts as the Proton acceptor in catalysis. His-108 and Glu-205 together coordinate Zn(2+). Cys-119 and Cys-556 are disulfide-bonded. Lys-759 carries the post-translational modification N6-acetyllysine. Lys-770 carries the post-translational modification N6-acetyllysine; alternate. N6-succinyllysine; alternate is present on Lys-770. The tract at residues Ile-803–His-834 is disordered. The segment covering Gly-804–Arg-814 has biased composition (basic residues). Lys-849 is subject to N6-succinyllysine. Lys-884 carries the post-translational modification N6-acetyllysine. Lys-946 is modified (N6-succinyllysine).

Belongs to the peptidase M16 family. PreP subfamily. As to quaternary structure, monomer and homodimer; homodimerization is induced by binding of the substrate. Zn(2+) is required as a cofactor. In terms of processing, a disulfide bond locks the enzyme in the closed conformation preventing substrate entry into the catalytic chamber.

The protein resides in the mitochondrion matrix. Its activity is regulated as follows. Mainly exists in a closed and catalytically competent conformation but a closed-to-open switch allows substrate entry into the catalytic chamber. Substrate binding induces closure and dimerization. A disulfide bond may lock the enzyme in a closed conformation preventing substrate entry into the catalytic chamber, participating in redox regulation of the enzyme. Inhibited by metal-chelating agents. Inhibited by nickel and zinc excess, and slightly activated by manganese. Functionally, metalloendopeptidase of the mitochondrial matrix that functions in peptide cleavage and degradation rather than in protein processing. Has an ATP-independent activity. Specifically cleaves peptides in the range of 5 to 65 residues. Shows a preference for cleavage after small polar residues and before basic residues, but without any positional preference. Degrades the transit peptides of mitochondrial proteins after their cleavage. Also degrades other unstructured peptides. It is also able to degrade amyloid-beta protein 40, one of the peptides produced by APP processing, when it accumulates in mitochondrion. It is a highly efficient protease, at least toward amyloid-beta protein 40. Cleaves that peptide at a specific position and is probably not processive, releasing digested peptides intermediates that can be further cleaved subsequently. It is also able to degrade amyloid-beta protein 42. The protein is Presequence protease, mitochondrial of Pongo abelii (Sumatran orangutan).